The following is a 295-amino-acid chain: MNEKLEKMRNGKGFIAALDQSGGSTPKALKLYGVNENEYSNDKEMFDLIHKMRTRIIKSPAFNESKILGAILFEQTMDSKIDGKYTADFLWEEKKVLPFLKIDKGLNDLDADGVQTMKPNPTLADLLKRANERHIFGTKMRSVIKKASPAGIARVVEQQFEVAAQVVAAGLIPIIEPEVDINNVDKVQCEEILRDEIRKHLNALPETSNVMLKLTLPTVENLYEEFTKHPRVVRVVALSGGYSREKANDILSKNKGVIASFSRALTEGLSAQQTDEEFNKTLAASIDGIYEASVK.

Glutamate 176 serves as the catalytic Proton acceptor. The active-site Schiff-base intermediate with dihydroxyacetone-P is the lysine 213.

It belongs to the class I fructose-bisphosphate aldolase family.

The enzyme catalyses beta-D-fructose 1,6-bisphosphate = D-glyceraldehyde 3-phosphate + dihydroxyacetone phosphate. It participates in carbohydrate degradation; glycolysis; D-glyceraldehyde 3-phosphate and glycerone phosphate from D-glucose: step 4/4. This Fusobacterium nucleatum subsp. nucleatum (strain ATCC 25586 / DSM 15643 / BCRC 10681 / CIP 101130 / JCM 8532 / KCTC 2640 / LMG 13131 / VPI 4355) protein is Fructose-bisphosphate aldolase class 1.